The primary structure comprises 863 residues: MKALRRFTVRAHLPERLAALDQLSTNLRWSWDKPTQDLFAAIDPALWEQCGHDPVALLGAVNPARLDELALDAEFLGALDELAADLNDYLSRPLWYQEQQDAGVAAQALPTGIAYFSLEFGVAEVLPNYSGGLGILAGDHLKSASDLGVPLIAVGLYYRSGYFRQSLTADGWQHETYPSLDPQGLPLRLLTDANGDPVLVEVALGDNAVLRARIWVAQVGRVPLLLLDSDIPENEHDLRNVTDRLYGGDQEHRIKQEILAGIGGVRAIRAYTAVEKLTPPEVFHMNEGHAGFLGIERIRELVTDAGLDFDTALTVVRSSTVFTTHTPVPAGIDRFPLEMVQRYVNDQRGDGRSRLLPGLPADRIVALGAEDDPAKFNMAHMGLRLAQRANGVSLLHGRVSRAMFNELWAGFDPDEVPIGSVTNGVHAPTWAAPQWLQLGRELAGSDSLREPVVWQRLHQVDPAHLWWIRSQLRSMLVEDVRARLRQSWLERGATDAELGWIATAFDPNVLTVGFARRVPTYKRLTLMLRDPDRLEQLLLDEQRPIQLIVAGKSHPADDGGKALIQQVVRFADRPQVRHRIAFLPNYDMSMARLLYWGCDVWLNNPLRPLEACGTSGMKSALNGGLNLSIRDGWWDEWYDGENGWEIPSADGVADENRRDDLEAGALYDLLAQAVAPKFYERDERGVPQRWVEMVRHTLQTLGPKVLASRMVRDYVEHYYAPAAQSFRRTAGAQFDAARELADYRRRAEEAWPKIEIADVDSTGLPDTPLLGSQLTLTATVRLAGLRPNDVTVQGVLGRVDAGDVLMDPVTVEMAHTGTGDGGYEIFSTTTPLPLAGPVGYTVRVLPRHPMLAASNELGLVTLA.

Position 618 is an N6-(pyridoxal phosphate)lysine (K618).

The protein belongs to the glycogen phosphorylase family. It depends on pyridoxal 5'-phosphate as a cofactor.

The enzyme catalyses [(1-&gt;4)-alpha-D-glucosyl](n) + phosphate = [(1-&gt;4)-alpha-D-glucosyl](n-1) + alpha-D-glucose 1-phosphate. Phosphorylase is an important allosteric enzyme in carbohydrate metabolism. Enzymes from different sources differ in their regulatory mechanisms and in their natural substrates. However, all known phosphorylases share catalytic and structural properties. This is Glycogen phosphorylase (glgP) from Mycobacterium tuberculosis (strain ATCC 25618 / H37Rv).